A 300-amino-acid polypeptide reads, in one-letter code: UDP-N-acetylenolpyruvoylglucosamine reductase (300 aa).

The 165-residue stretch at Thr29 to Gly193 folds into the FAD-binding PCMH-type domain. Arg172 is a catalytic residue. Ser222 acts as the Proton donor in catalysis. Glu292 is a catalytic residue.

Belongs to the MurB family. It depends on FAD as a cofactor.

The protein localises to the cytoplasm. It carries out the reaction UDP-N-acetyl-alpha-D-muramate + NADP(+) = UDP-N-acetyl-3-O-(1-carboxyvinyl)-alpha-D-glucosamine + NADPH + H(+). It participates in cell wall biogenesis; peptidoglycan biosynthesis. Functionally, cell wall formation. This chain is UDP-N-acetylenolpyruvoylglucosamine reductase, found in Pediococcus pentosaceus (strain ATCC 25745 / CCUG 21536 / LMG 10740 / 183-1w).